The chain runs to 1238 residues: Receptor-type tyrosine-protein phosphatase eta (1238 aa).

An N-terminal signal peptide occupies residues 1-28 (MKPAARETRTPPRSPGLRWALLPLLLLL). At 29–876 (RQGQVLCAGA…LPQDPGVICG (848 aa)) the chain is on the extracellular side. The Fibronectin type-III 1 domain occupies 39-122 (APNPIFDIEA…LNKTITTEPW (84 aa)). Asn-62, Asn-78, Asn-85, Asn-90, Asn-110, Asn-114, Asn-145, Asn-164, Asn-173, Asn-182, Asn-198, Asn-207, Asn-244, Asn-253, Asn-267, Asn-278, Asn-313, Asn-317, Asn-333, Asn-366, Asn-379, Asn-398, Asn-403, Asn-437, Asn-452, Asn-488, Asn-506, Asn-538, Asn-572, Asn-576, Asn-662, Asn-668, Asn-685, Asn-691, Asn-725, Asn-811, and Asn-838 each carry an N-linked (GlcNAc...) asparagine glycan. The region spanning 170-266 (PGTNNSFAFP…GQPRNKVFKT (97 aa)) is the Fibronectin type-III 2 domain. Fibronectin type-III domains lie at 270–358 (QVSD…SPDQ), 359–443 (VSDF…TDPS), 444–527 (AVTD…TQYT), 528–621 (RPSS…TEPE), 622–718 (PVTS…TDPP), and 717–803 (PPTP…SEVL). The chain crosses the membrane as a helical span at residues 877-897 (AVFGCIFGALAITAVGGFIFW). Residues 898 to 1238 (RKKRTDAKNN…MFGKTNGYIA (341 aa)) are Cytoplasmic-facing. Residue Ser-910 is modified to Phosphoserine. In terms of domain architecture, Tyrosine-protein phosphatase spans 942–1199 (FAEEYEDLKL…VFLNQCVLDI (258 aa)). Substrate-binding positions include Asp-1106, 1140–1146 (CSAGVGR), and Gln-1184. Catalysis depends on Cys-1140, which acts as the Phosphocysteine intermediate.

Belongs to the protein-tyrosine phosphatase family. Receptor class 3 subfamily. Monomer. Interacts with CTNNB1 (phosphorylated) and JUP (phosphorylated). Interacts with FLT3 (phosphorylated). Interacts with GAB1 and GRB2. As to expression, expressed at high levels in brain, kidney, spleen and intestine, and at lower levels in liver, lung, thymus and heart. Expressed at a high level in the myeloid cell line FDC-P2, and at a lower level in the pre-B lymphoid cell line WEHI-231 and the T hybridoma cell line HB21.7.31. Not expressed in the fibroblast cell line NIH3T3 or the erythroid cell line F5-5. Expressed in macrophages.

Its subcellular location is the cell membrane. It is found in the cell projection. The protein resides in the ruffle membrane. The protein localises to the cell junction. It carries out the reaction O-phospho-L-tyrosyl-[protein] + H2O = L-tyrosyl-[protein] + phosphate. Its function is as follows. Tyrosine phosphatase which dephosphorylates or contributes to the dephosphorylation of CTNND1, FLT3, PDGFRB, MET, KDR, LYN, SRC, MAPK1, MAPK3, EGFR, TJP1, OCLN, PIK3R1 and PIK3R2. Plays a role in cell adhesion, migration, proliferation and differentiation. Has a role in megakaryocytes and platelet formation. Involved in vascular development. May be involved in the mechanism of contact inhibition of cell growth. Regulator of macrophage adhesion and spreading. Positively affects cell-matrix adhesion. Positive regulator of platelet activation and thrombosis. Negative regulator of cell proliferation. Negative regulator of PDGF-stimulated cell migration; through dephosphorylation of PDGFR. Positive regulator of endothelial cell survival, as well as of VEGF-induced SRC and AKT activation; through KDR dephosphorylation. Negative regulator of EGFR signaling pathway; through EGFR dephosphorylation. Enhances the barrier function of epithelial junctions during reassembly. Negatively regulates T-cell receptor (TCR) signaling. Upon T-cell TCR activation, it is up-regulated and excluded from the immunological synapses, while upon T-cell-antigen presenting cells (APC) disengagement, it is no longer excluded and can dephosphorylate PLCG1 and LAT to down-regulate prolongation of signaling. The sequence is that of Receptor-type tyrosine-protein phosphatase eta (Ptprj) from Mus musculus (Mouse).